A 162-amino-acid polypeptide reads, in one-letter code: Large ribosomal subunit protein uL15 (162 aa).

Over residues 1–13 (MNLNELRDNEGSR) the composition is skewed to basic and acidic residues. Positions 1-39 (MNLNELRDNEGSRYRKKRLGRGIGSGKGKTSGRGVKGQK) are disordered. Positions 21 to 35 (RGIGSGKGKTSGRGV) are enriched in gly residues.

It belongs to the universal ribosomal protein uL15 family. Part of the 50S ribosomal subunit.

Functionally, binds to the 23S rRNA. The polypeptide is Large ribosomal subunit protein uL15 (Gluconobacter oxydans (strain 621H) (Gluconobacter suboxydans)).